A 328-amino-acid polypeptide reads, in one-letter code: MSRCIRQSVCTNFNVCRRQCFSTYASALKEMTHPIKPSAQTLRHLQFTQRIPFQKGLEIQETLVRANLDIKDIQSKIERKLIQLDEEYKGTATINDNEKRILDKVMAMKPNPIILTFEFEPTYTGGKRIKKTMTPDQIAAYESFIPETQKDNPRPKFVQVERGGQVTFHGPGQIVIYIILDLKTFQSFPAKCLVSCIEQATIRTLKNTKMCDDTDKPLNLDAMTTKDTGVWVENGKKKVASVGIHVRRSITSHGVAINVNTDLSYMNSFEMCGLKNTLTTSIMEQRPDAVVNVQSVAISFVKEMTKLLGIKTLERMQIDDVNILKKNP.

The BPL/LPL catalytic domain occupies Met108–Thr312. Substrate contacts are provided by residues Arg162–His169, Ser241–Gly243, and Gly254–Ala256. Residue Cys272 is the Acyl-thioester intermediate of the active site.

This sequence belongs to the LipB family.

The protein localises to the mitochondrion. The enzyme catalyses octanoyl-[ACP] + L-lysyl-[protein] = N(6)-octanoyl-L-lysyl-[protein] + holo-[ACP] + H(+). Its pathway is protein modification; protein lipoylation via endogenous pathway; protein N(6)-(lipoyl)lysine from octanoyl-[acyl-carrier-protein]: step 1/2. In terms of biological role, catalyzes the transfer of endogenously produced octanoic acid from octanoyl-acyl-carrier-protein onto the lipoyl domains of lipoate-dependent enzymes. Lipoyl-ACP can also act as a substrate although octanoyl-ACP is likely to be the physiological substrate. The polypeptide is Octanoyltransferase, mitochondrial (LIP2) (Saccharomyces cerevisiae (strain ATCC 204508 / S288c) (Baker's yeast)).